The sequence spans 332 residues: MKTLGEFIVEKQHEFSHATGELTALLSAIKLGAKIIHRDINKAGLVDILGASGAENVQGEVQQKLDLFANEKLKAALRARDIVAGIASEEEDEIVVFEGCEHAKYVVLMDPLDGSSNIDVNVSVGTIFSIYRRVTPVGTAVTEEDFLQPGNKQVAAGYVVYGSSTMLVYTTGCGVHAFTYDPSLGVFCLCQERMRYPEKGSTYSINEGNYIKFPNGVKKYIKFCQEEDTPTQRPYTSRYIGSLVADFHRNLLKGGIYLYPSTASHPDGKLRLLYECNPMAFLAEQAGGKASDGKERILDITPESLHQRRSFFVGNNHMVEDVERLIREYPDA.

The Mg(2+) site is built by Glu-89, Asp-110, Leu-112, and Asp-113. Substrate-binding positions include 113 to 116, Asn-206, Tyr-239, 257 to 259, and Lys-269; these read DGSS and YLY. Glu-275 contacts Mg(2+).

It belongs to the FBPase class 1 family. Homotetramer. Mg(2+) serves as cofactor.

Its subcellular location is the cytoplasm. It carries out the reaction beta-D-fructose 1,6-bisphosphate + H2O = beta-D-fructose 6-phosphate + phosphate. The protein operates within carbohydrate biosynthesis; gluconeogenesis. The sequence is that of Fructose-1,6-bisphosphatase class 1 from Enterobacter sp. (strain 638).